A 122-amino-acid chain; its full sequence is Large ribosomal subunit protein uL14 (122 aa).

This sequence belongs to the universal ribosomal protein uL14 family. In terms of assembly, part of the 50S ribosomal subunit. Forms a cluster with proteins L3 and L19. In the 70S ribosome, L14 and L19 interact and together make contacts with the 16S rRNA in bridges B5 and B8.

Its function is as follows. Binds to 23S rRNA. Forms part of two intersubunit bridges in the 70S ribosome. This Thermus aquaticus protein is Large ribosomal subunit protein uL14.